A 420-amino-acid polypeptide reads, in one-letter code: MSQGVTAPFARHAMAYVLAGGRGSRLMELTDWRAKPAVYFGGKSRIIDFALSNALNSGIRRIAVATQYKAHSLIRHLQRGWNFFRPERNESFDILPASQRVSEEMWYRGTADAVFQNIDIIESYDPKFIVLLAGDHVYKMDYEKMLQQHVEQGADVTVGCLEVPRAEATAFGVMHTDTTDRIISFLEKPADPPAMPGKADKSLVSMGIYVFETKFLLDELRRDAADPNSSHDFGKDIIPYIVKHGKAVAHHFDKSCRRSSSEAVSYWRDVGTVDAYWAANIDLTDIVPELDLYDREWPIWTYGEITPPAKFVHDKEGRRGEAVSSLVSGGCIISGASLRHSLLFTGVRVHSFSHVENTVVLPYADIGRSCRLKNVVIDAEVKLPAGLVVGEDPELDAKRFRRTENGICLITRAMIEKLDA.

Residues Tyr-107, Gly-172, 187–188 (EK), and Ser-205 each bind alpha-D-glucose 1-phosphate.

This sequence belongs to the bacterial/plant glucose-1-phosphate adenylyltransferase family. In terms of assembly, homotetramer.

The enzyme catalyses alpha-D-glucose 1-phosphate + ATP + H(+) = ADP-alpha-D-glucose + diphosphate. The protein operates within glycan biosynthesis; glycogen biosynthesis. Involved in the biosynthesis of ADP-glucose, a building block required for the elongation reactions to produce glycogen. Catalyzes the reaction between ATP and alpha-D-glucose 1-phosphate (G1P) to produce pyrophosphate and ADP-Glc. The chain is Glucose-1-phosphate adenylyltransferase from Rhodopseudomonas palustris (strain TIE-1).